Reading from the N-terminus, the 143-residue chain is Cofilin (143 aa).

At S4 the chain carries Phosphoserine. In terms of domain architecture, ADF-H spans 5-137; sequence GVAVADESLT…SYDSVLERVS (133 aa).

The protein belongs to the actin-binding proteins ADF family. As to quaternary structure, interacts with actin and AIP1 in a ternary complex. Post-translationally, the N-terminus is blocked.

The protein localises to the cytoplasm. Its subcellular location is the cytoskeleton. The protein resides in the nucleus matrix. Controls reversibly actin polymerization and depolymerization in a pH-sensitive manner. It has the ability to bind G- and F-actin in a 1:1 ratio of cofilin to actin. Binding to F-actin is regulated by tropomyosin. It is the major component of intranuclear and cytoplasmic actin rods. Required for accumulation of actin at the cell division site via depolymerizing actin at the cell ends. In association with myosin II has a role in the assembly of the contractile ring via severing actin filaments. Involved in the maintenance of the contractile ring once formed. In association with profilin and capping protein, has a role in the mitotic reorganization of the actin cytoskeleton. In effect, yeast cofilin increases the rate of actin polymerization by making new ends available for actin subunit addition. Such a protein complex is important for the polarized growth of yeast cells. The chain is Cofilin (COF1) from Saccharomyces cerevisiae (strain ATCC 204508 / S288c) (Baker's yeast).